A 294-amino-acid chain; its full sequence is 33 kDa chaperonin (294 aa).

Cystine bridges form between C236–C238 and C269–C272.

Belongs to the HSP33 family. In terms of processing, under oxidizing conditions two disulfide bonds are formed involving the reactive cysteines. Under reducing conditions zinc is bound to the reactive cysteines and the protein is inactive.

The protein resides in the cytoplasm. Redox regulated molecular chaperone. Protects both thermally unfolding and oxidatively damaged proteins from irreversible aggregation. Plays an important role in the bacterial defense system toward oxidative stress. In Desulfotalea psychrophila (strain LSv54 / DSM 12343), this protein is 33 kDa chaperonin.